A 152-amino-acid polypeptide reads, in one-letter code: UPF0178 protein YaiI (152 aa).

Belongs to the UPF0178 family.

The polypeptide is UPF0178 protein YaiI (Escherichia coli O17:K52:H18 (strain UMN026 / ExPEC)).